A 933-amino-acid chain; its full sequence is 2-oxoglutarate dehydrogenase E1 component (933 aa).

It belongs to the alpha-ketoglutarate dehydrogenase family. As to quaternary structure, homodimer. Part of the 2-oxoglutarate dehydrogenase (OGDH) complex composed of E1 (2-oxoglutarate dehydrogenase), E2 (dihydrolipoamide succinyltransferase) and E3 (dihydrolipoamide dehydrogenase); the complex contains multiple copies of the three enzymatic components (E1, E2 and E3). Interacts (via N-terminus) with SucB, the E2 component of OGDH complex. The cofactor is thiamine diphosphate.

The enzyme catalyses N(6)-[(R)-lipoyl]-L-lysyl-[protein] + 2-oxoglutarate + H(+) = N(6)-[(R)-S(8)-succinyldihydrolipoyl]-L-lysyl-[protein] + CO2. Its function is as follows. E1 component of the 2-oxoglutarate dehydrogenase (OGDH) complex which catalyzes the decarboxylation of 2-oxoglutarate, the first step in the conversion of 2-oxoglutarate to succinyl-CoA and CO(2). This Escherichia coli O157:H7 protein is 2-oxoglutarate dehydrogenase E1 component (sucA).